The primary structure comprises 355 residues: Sulfate/thiosulfate import ATP-binding protein CysA (355 aa).

The ABC transporter domain occupies isoleucine 3–isoleucine 233. ATP is bound at residue glycine 35–serine 42.

Belongs to the ABC transporter superfamily. Sulfate/tungstate importer (TC 3.A.1.6) family. The complex is composed of two ATP-binding proteins (CysA), two transmembrane proteins (CysT and CysW) and a solute-binding protein (CysP).

The protein resides in the cell inner membrane. It carries out the reaction sulfate(out) + ATP + H2O = sulfate(in) + ADP + phosphate + H(+). The enzyme catalyses thiosulfate(out) + ATP + H2O = thiosulfate(in) + ADP + phosphate + H(+). Part of the ABC transporter complex CysAWTP involved in sulfate/thiosulfate import. Responsible for energy coupling to the transport system. The sequence is that of Sulfate/thiosulfate import ATP-binding protein CysA from Synechocystis sp. (strain ATCC 27184 / PCC 6803 / Kazusa).